The chain runs to 332 residues: D-2-hydroxyacid dehydrogenase (NAD(+)) (332 aa).

Catalysis depends on residues arginine 237 and glutamate 266. Histidine 298 (proton donor) is an active-site residue.

It belongs to the D-isomer specific 2-hydroxyacid dehydrogenase family. Monomer.

It carries out the reaction a (2R)-2-hydroxycarboxylate + NAD(+) = a 2-oxocarboxylate + NADH + H(+). It catalyses the reaction (2R)-hydroxy-4-methylpentanoate + NAD(+) = 4-methyl-2-oxopentanoate + NADH + H(+). It participates in amino-acid degradation; L-leucine degradation. Functionally, involved in the reductive branch of L-leucine fermentation. Catalyzes the NADH-dependent reduction of 4-methyl-2-oxopentanoate (2-oxoisocaproate) to (R)-2-hydroxy-4-methylpentanoate ((R)-2-hydroxyisocaproate). For the reverse reaction, the enzyme accepts (R)- but not (S)-2-hydroxy-4-methylpentanoate. Can also use 2-oxopentanoate, 2-oxohexanoate and phenylpyruvate but not 2-oxoisovalerate and 2-oxobutyrate. Cannot use NADPH. The polypeptide is D-2-hydroxyacid dehydrogenase (NAD(+)) (Clostridioides difficile (Peptoclostridium difficile)).